The sequence spans 144 residues: NADH dehydrogenase [ubiquinone] 1 alpha subcomplex subunit 13 (144 aa).

The residue at position 2 (Ala-2) is an N-acetylalanine. Residues 30–51 (LSGYSMFAVGIGALLFGYWSMM) traverse the membrane as a helical segment.

In terms of assembly, complex I is composed of 45 different subunits. Interacts with CARD15, but not with CARD4. Interacts with STAT3, but not with STAT1, STAT2 and STAT5A. Interacts with OLFM4.

Its subcellular location is the mitochondrion inner membrane. The protein resides in the nucleus. Its function is as follows. Accessory subunit of the mitochondrial membrane respiratory chain NADH dehydrogenase (Complex I), that is believed not to be involved in catalysis. Complex I functions in the transfer of electrons from NADH to the respiratory chain. The immediate electron acceptor for the enzyme is believed to be ubiquinone. Involved in the interferon/all-trans-retinoic acid (IFN/RA) induced cell death. This apoptotic activity is inhibited by interaction with viral IRF1. Prevents the transactivation of STAT3 target genes. May play a role in CARD15-mediated innate mucosal responses and serve to regulate intestinal epithelial cell responses to microbes. This Bos taurus (Bovine) protein is NADH dehydrogenase [ubiquinone] 1 alpha subcomplex subunit 13 (NDUFA13).